Consider the following 952-residue polypeptide: Leucine--tRNA ligase (952 aa).

Residues 65 to 76 (PYPSGAGLHVGH) carry the 'HIGH' region motif. The 'KMSKS' region motif lies at 727-731 (KMGKS). Lysine 730 is a binding site for ATP.

The protein belongs to the class-I aminoacyl-tRNA synthetase family.

The protein resides in the cytoplasm. It carries out the reaction tRNA(Leu) + L-leucine + ATP = L-leucyl-tRNA(Leu) + AMP + diphosphate. In Salinispora arenicola (strain CNS-205), this protein is Leucine--tRNA ligase.